A 133-amino-acid polypeptide reads, in one-letter code: Small ribosomal subunit protein bS16 (133 aa).

The interval 99-133 is disordered; that stretch reads EKWQQNQTERRQKRLAVKTRRRQAKKAAEAKGAEA. Positions 109–123 are enriched in basic residues; sequence RQKRLAVKTRRRQAK. A compositionally biased stretch (basic and acidic residues) spans 124–133; the sequence is KAAEAKGAEA.

Belongs to the bacterial ribosomal protein bS16 family.

The sequence is that of Small ribosomal subunit protein bS16 from Chlorobium limicola (strain DSM 245 / NBRC 103803 / 6330).